Reading from the N-terminus, the 3530-residue chain is Unconventional myosin-XV (3530 aa).

3 disordered regions span residues 1 to 46 (MAKE…RTPK), 615 to 710 (AGMD…PAHV), and 730 to 1057 (EVPP…QKTL). Pro residues predominate over residues 663–681 (PPVPPRPPSSGPPPAPPLS). Low complexity-rich tracts occupy residues 682–693 (PALSGLPRPASP), 753–763 (AAFGFPGASPR), and 823–835 (SPAPRRAAGRLGP). Residues 836 to 850 (PGSPLPGSPRPPSPP) are compositionally biased toward pro residues. Over residues 859-869 (RSSLNLPSRLP) the composition is skewed to low complexity. Residues 903–913 (PLEHRESPREP) are compositionally biased toward basic and acidic residues. The segment covering 1027-1038 (TKPPTPAPPKDV) has biased composition (pro residues). The Myosin motor domain maps to 1222–1899 (DGVEDMTQLE…LYQLLESMRE (678 aa)). 1315-1322 (GESGSGKT) contributes to the ATP binding site. The stretch at 1323–1350 (EATKLILRYLAAMNQKREVMQQIKILEA) forms a coiled coil. An actin-binding region spans residues 1792–1799 (FMRCLKPN). Positions 1888–2029 (EHLYQLLESM…AQVPQVAPVR (142 aa)) are neck or regulatory domain. 3 IQ domains span residues 1902 to 1924 (LNLAALTLQRCLRGFFIKRRFRS), 1925 to 1954 (LRHKIILLQSRARGYLARQRYQQMRRSLVK), and 1955 to 1976 (FRSLVHAYVSRRRYLKLRAEWR). A tail region spans residues 2030 to 3530 (TPRLQAEPRV…TLPPSEITLL (1501 aa)). Residues 2065–2217 (MLTVPLRTPL…PTQLEWTATY (153 aa)) form the MyTH4 1 domain. Disordered stretches follow at residues 2311-2381 (AASR…GEPA), 2414-2446 (YRMKGGGQPGGGSSSGTEDTPRRPPEPKPIPGL), 2490-2509 (AEKPPAPEAQPTSVGTGPPA), and 2644-2665 (TSAPRPSMAPTSALPSRSLEPP). Residues 2349–2371 (GYSSHNQDGTNGETEAQRGTATH) are compositionally biased toward polar residues. Over residues 2417-2427 (KGGGQPGGGSS) the composition is skewed to gly residues. Residues 2867–2953 (KDSDYVVAVR…PSELVQPAAA (87 aa)) form the SH3 domain. Residues 3050 to 3204 (FTKTPLQESL…PSSIELRAML (155 aa)) form the MyTH4 2 domain. Residues 3209–3530 (SKRQLFLLPG…TLPPSEITLL (322 aa)) form the FERM domain.

The protein belongs to the TRAFAC class myosin-kinesin ATPase superfamily. Myosin family. Interacts with the third PDZ domain of WHRN which is necessary for localization of WHRN to stereocilium tips. Interacts with EPS8. Interacts with FASLG. As to expression, highly expressed in pituitary. Also expressed at lower levels in adult brain, kidney, liver, lung, pancreas, placenta and skeletal muscle. Not expressed in brain. In the pituitary, highly expressed in anterior gland cells.

The protein resides in the cell projection. It localises to the stereocilium. It is found in the cytoplasm. Its subcellular location is the cytoskeleton. In terms of biological role, myosins are actin-based motor molecules with ATPase activity. Unconventional myosins serve in intracellular movements. Their highly divergent tails are presumed to bind to membranous compartments, which would be moved relative to actin filaments. Required for the arrangement of stereocilia in mature hair bundles. The polypeptide is Unconventional myosin-XV (MYO15A) (Homo sapiens (Human)).